Here is an 871-residue protein sequence, read N- to C-terminus: MSELTPMMRQYLEIKADHPDAILFFRLGDFYEMFLDDAVKASRILDITLTSRNKGGDGADIPLCGVPFHSAAPYIAKLVEAGEKVAICEQVEDPKSVKGIVKREVVKVVTPGLVIDAESLSPKENNYLLSLFPGPDRWGVAYLDLSTGDFRVTETDSADAAWAEVACVNPREILMPLSFRDGGAGSERPDLAAGRMLSYVDEWVYDAEYAERMVRNHFGVASAEAAGCGSMDCGLRAVAAVLHYLQQTQKGDVRHISYLQAYRTQEFLVLDESSRRNLELNATIGDGKRRGSLLGLLDRTVTAMGGRKLKQWINYPLVSIEKINERLDAVEELVADAEFRQGVRAALDGVYDLERLNGRISLASASAKDLVALRASLVRLPSLIALLTPAASTLLARLRDGIDLLADVEELIGRGIVPDPPFVLREGGIIAQGYHSELDELRSISREGKGFIARLEAQEKARTGISSLKVRYNKVFGYYIEVTKSNLSAIPDDYIRRQTLANAERFITPELKEYEEKVLGAEDRIVELEYALFQDIRQRVAAQGERIARTADRLATLDVLAALADVAHDHRYVRPTVDEGDAIVVTGGRHPVVEALNRSERFVANDVQLDNGENQLVIITGPNMAGKSTFMRQVALIVLMAQTGSFVPADEASIGVVDRIFTRVGASDNLARGQSTFMVEMMETAAILRNATPRSLVVLDEIGRGTSTFDGVSIAWAVAEYLHDTERCAAKTLFATHYHELTELAVTRNRVKNCNVAVKEWNDQVIFLRKIVEGGASHSYGIQVARLAGLPQEVIERAKEILHNLEKGEYAEGGIPRIARGKRAGAPKPSPQLSLFDQGDDLLRRRIAGLNIAALTPLEALNILDELKRMV.

621-628 (GPNMAGKS) lines the ATP pocket.

This sequence belongs to the DNA mismatch repair MutS family.

Its function is as follows. This protein is involved in the repair of mismatches in DNA. It is possible that it carries out the mismatch recognition step. This protein has a weak ATPase activity. This Geobacter sulfurreducens (strain ATCC 51573 / DSM 12127 / PCA) protein is DNA mismatch repair protein MutS.